The sequence spans 301 residues: 2-(hydroxymethyl)glutarate dehydrogenase (301 aa).

Residues 8-22 (GFIG…MAIN) and S99 each bind NAD(+). Residue K174 is part of the active site. Position 243 (K243) interacts with NAD(+).

It belongs to the HIBADH-related family. Homotetramer.

The enzyme catalyses (S)-2-hydroxymethylglutarate + NAD(+) = 2-formylglutarate + NADH + H(+). It functions in the pathway cofactor degradation; nicotinate degradation; propanoate and pyruvate from 6-hydroxynicotinate: step 3/8. In terms of biological role, catalyzes the conversion of 2-formylglutarate to (S)-2-hydroxymethylglutarate. Has very low activity with (S)-3-hydroxyisobutyrate. This is 2-(hydroxymethyl)glutarate dehydrogenase from Eubacterium barkeri (Clostridium barkeri).